We begin with the raw amino-acid sequence, 341 residues long: Ribosomal RNA small subunit methyltransferase C (341 aa).

Belongs to the methyltransferase superfamily. RsmC family. In terms of assembly, monomer.

Its subcellular location is the cytoplasm. The catalysed reaction is guanosine(1207) in 16S rRNA + S-adenosyl-L-methionine = N(2)-methylguanosine(1207) in 16S rRNA + S-adenosyl-L-homocysteine + H(+). Its function is as follows. Specifically methylates the guanine in position 1207 of 16S rRNA in the 30S particle. This is Ribosomal RNA small subunit methyltransferase C from Pseudoalteromonas translucida (strain TAC 125).